The primary structure comprises 280 residues: Late embryogenesis abundant protein 76 (280 aa).

Disordered regions lie at residues 1 to 156 and 220 to 241; these read MASN…GEAV and EEED…TDPT. The span at 28–39 shows a compositional bias: basic and acidic residues; it reads MRDKAEEGKDKT. LEA 11-mer repeat repeat units lie at residues 31-41, 53-63, 75-85, 97-107, and 119-129; these read KAEEGKDKTSQ, TAQAAKDKTSQ, and TTQSSKEKTSQ. The segment covering 40–114 has biased composition (low complexity); it reads SQTAQKAQQK…TSQAAQTTQQ (75 aa). 2 stretches are compositionally biased toward basic and acidic residues: residues 115–127 and 136–145; these read KAHE…KEKT and EKARETKDKT. A compositionally biased stretch (low complexity) spans 230–239; that stretch reads TTTCTTQSTD.

The protein belongs to the LEA type 4 family.

Functionally, lea proteins are late embryonic proteins abundant in higher plant seed embryos. This is Late embryogenesis abundant protein 76 from Brassica napus (Rape).